Reading from the N-terminus, the 1019-residue chain is Protein HIRA (1019 aa).

WD repeat units lie at residues 11 to 53 (HNGK…KEED), 68 to 107 (NHLA…GPST), 129 to 168 (SHSG…EILA), 172 to 211 (GHSG…LETS), 220 to 263 (GGTT…TNMD), 266 to 322 (GHRK…PLVV), and 326 to 367 (LFDK…DPLS). Residues 23 to 443 (PDGTKFATGG…ASMVNGESLE (421 aa)) form an interaction with RBBP4 region. Low complexity-rich tracts occupy residues 406 to 415 (QRQQQQQAEQ) and 544 to 561 (ATSV…VLTT). Disordered stretches follow at residues 406–433 (QRQQ…APKV), 513–561 (ANSL…VLTT), and 599–633 (LKDQ…LSAP). Residues 444-1019 (DIRKNLLKKQ…TEYQEQLDIL (576 aa)) form an interaction with HDAC1 region. Residues 599 to 625 (LKDQNLIKDNKPKDILESSSDSEEKIP) are compositionally biased toward basic and acidic residues. The segment at 960–1019 (RLRELCKDLLGPVHYSRGSQWESTVMGLRKRELLKELLPVIGQNLFQRLFTEYQEQLDIL) is interaction with HDAC2.

This sequence belongs to the WD repeat HIR1 family. As to quaternary structure, interacts with ASF1, HDAC1, HDAC2 and RBBP4.

It localises to the nucleus. Functionally, cooperates with ASF1A to promote replication-independent chromatin assembly. May regulate the transcription of a variety of genes controlling cell growth. The chain is Protein HIRA (HIRA) from Gallus gallus (Chicken).